Consider the following 94-residue polypeptide: Long neurotoxin LNTX8 (94 aa).

Positions 1–21 (MKTLLLTLVVVTIMCLDLGYT) are cleaved as a signal peptide. Cystine bridges form between Cys-24-Cys-43, Cys-36-Cys-64, Cys-49-Cys-53, Cys-68-Cys-79, and Cys-80-Cys-85.

The protein belongs to the three-finger toxin family. Long-chain subfamily. Type II alpha-neurotoxin sub-subfamily. In terms of tissue distribution, expressed by the venom gland.

Its subcellular location is the secreted. Functionally, binds with high affinity to muscular (alpha-1/CHRNA1) and neuronal (alpha-7/CHRNA7) nicotinic acetylcholine receptor (nAChR) and inhibits acetylcholine from binding to the receptor, thereby impairing neuromuscular and neuronal transmission. The sequence is that of Long neurotoxin LNTX8 from Ophiophagus hannah (King cobra).